The sequence spans 619 residues: Dihydroxy-acid dehydratase (619 aa).

Asp-81 serves as a coordination point for Mg(2+). Cys-122 contacts [2Fe-2S] cluster. Mg(2+)-binding residues include Asp-123 and Lys-124. An N6-carboxylysine modification is found at Lys-124. Cys-195 lines the [2Fe-2S] cluster pocket. Glu-491 serves as a coordination point for Mg(2+). Catalysis depends on Ser-517, which acts as the Proton acceptor.

The protein belongs to the IlvD/Edd family. Homodimer. [2Fe-2S] cluster serves as cofactor. Requires Mg(2+) as cofactor.

The enzyme catalyses (2R)-2,3-dihydroxy-3-methylbutanoate = 3-methyl-2-oxobutanoate + H2O. It carries out the reaction (2R,3R)-2,3-dihydroxy-3-methylpentanoate = (S)-3-methyl-2-oxopentanoate + H2O. It functions in the pathway amino-acid biosynthesis; L-isoleucine biosynthesis; L-isoleucine from 2-oxobutanoate: step 3/4. It participates in amino-acid biosynthesis; L-valine biosynthesis; L-valine from pyruvate: step 3/4. In terms of biological role, functions in the biosynthesis of branched-chain amino acids. Catalyzes the dehydration of (2R,3R)-2,3-dihydroxy-3-methylpentanoate (2,3-dihydroxy-3-methylvalerate) into 2-oxo-3-methylpentanoate (2-oxo-3-methylvalerate) and of (2R)-2,3-dihydroxy-3-methylbutanoate (2,3-dihydroxyisovalerate) into 2-oxo-3-methylbutanoate (2-oxoisovalerate), the penultimate precursor to L-isoleucine and L-valine, respectively. In Sphingopyxis alaskensis (strain DSM 13593 / LMG 18877 / RB2256) (Sphingomonas alaskensis), this protein is Dihydroxy-acid dehydratase.